Reading from the N-terminus, the 370-residue chain is Histidinol-phosphate aminotransferase (370 aa).

K222 carries the post-translational modification N6-(pyridoxal phosphate)lysine.

This sequence belongs to the class-II pyridoxal-phosphate-dependent aminotransferase family. Histidinol-phosphate aminotransferase subfamily. In terms of assembly, homodimer. It depends on pyridoxal 5'-phosphate as a cofactor.

The catalysed reaction is L-histidinol phosphate + 2-oxoglutarate = 3-(imidazol-4-yl)-2-oxopropyl phosphate + L-glutamate. The protein operates within amino-acid biosynthesis; L-histidine biosynthesis; L-histidine from 5-phospho-alpha-D-ribose 1-diphosphate: step 7/9. The sequence is that of Histidinol-phosphate aminotransferase from Bacillus cytotoxicus (strain DSM 22905 / CIP 110041 / 391-98 / NVH 391-98).